Here is a 2210-residue protein sequence, read N- to C-terminus: MAPVVSRDRHRHKIPKPHQPAPPHRCTVWCPEDCGWYVGRCSCPKSCQREGWDDFFVADKVKPPSYVASKTSVADVVDWLLEEDPATDGPSEFDLTQFFQAYTDKSHQIHRDYAPDQLAQALDMAYILSVDPPDIKLPEYEATRFTHDTSYKGKLPRWLRVYGFKSRELAKKAITNIKGGAHWAKGLFKQAWDTLPGWSEVEAYFKAFFAGIITGVEDALSKSPSSVWTSLKLTPLLYIWRNINECSDIPVILGAFWATLELYNIPSKVYDLVSTALGPMVQDLARRVINIIKGDGNGPKQEGGRPSFSIPGVLLATFLSAIILGSMPSDGIIKKVLRGCATAAGLVGGFNAVKSIITTVQGASACKDVKKLASQLMCVTTMAATVSTRGERQVLASMLNDLNESVRERLVDPAFAALVPQLSAMSSKIMELSTINAAALSAARKRVPAKIVVLCGPPGHGKSVAAHKLAKMLNPNEPSIWNPFSDHHDEYTAEDVVIIDETPAEPGQWVEDLIAMGSNSPFVPNYDRVENKTRCFDSKYVLITTNHNPLINPTHSRAAALARRLTWVYVNSPDVADFLRQHPGVAPPATLFKADCSHLNFDIHPYNSIGTTAVVGHNGTTPLPRAKRTSLEGLCKHIKDLPDREGPPDGVPERMVLVAPDKGTARFVEAVINTYHNSGLVAQPAAWDTTPQKYQLAVTWQGSTSSVVGQRWDCNPQTPFVAPHFTRNMFKRVLGTEVPEYHLLAYACRITSSSLGDKSLPVPNPTVVINDPSPTRLALALMRHLKNPIASGLRVVWDLFRGCATGPKRLFTWALSQEWNPMPVTTAFTFPAGTVILHTAGGVRVVVLPPGPQFGLTEVTHLADHSGQDDPVVPDMFGQTWTELLWRLLKVIGTFLANYGVAIAGLTLSIAAFKTANKSTRNDRQGWLSGSGVALSDEEYDEWMKYSKKKGKKINADEFLQLRHRAAMGNDDDDARDYRSFYTAYQLGREGNNCEDLPLHPAVGPTTGGGYYVHIGNGVGITLKHVASGEDVIKELGNDLVKIRARHHKMGDPAMVVGEGAPVKFVTGHLVVDARNESVVFDQTRLSVVRVKVPGLETQRGYCGLPYVNSAGHVVGLHQGSYGVGDKVFTPITDAPAASPDTIMWRGLECTRSDIVTHLPHGTKYSISPGMREEAHKCTHQPASLGRNDPRCNQTQVAMVVKALTPYTSAPAIEKLDPCMVAAITEVRTAIQSLTPKGGFRPLTFAAAWQSLDLSTSAGALAPGKTKRDLCDPDTGMPAGKYREMLLAAWSRAGTGTPLDHTYIVALKDELRPVEKVAEGKRRLIWGADARVALIASAALTPVANALKTVTNLLPIQVGVDPSSANCVSSWVGRLQRHDHCLELDYSKWDSTMSPVIINIAIDILCNTCGSDSLRMAVAQTLKSRPTALVEGVSVPTKSGLPSGMPFTSQINSIVHWILWSATVRKCSLPLHIGSVNELAPFLTYGDDGLYTIPSHLTKSIDEIISTLKGYGLSPTAPDKGANVEIKRTSFTYLSGPVFLKRRIVLTPGGHRALLDLTSLARQPVWVNGPRRSVWNHEAQPIEIDAETRTIQLQNVLIELAWHQPQDFDHVLALVVKSAEASGLTIPRYSQEEARAIYDGRYYGIQHVSLPNNSDLIREGNMSDNKSTPEQQHESSRAMDAGATGAAAAAPAPPVAAAPASGLVGALVAEPQSGPSAEQWRTAYTLFGTVSWNANAGPGTILTVGRLGPGMNPYTQHIAAMYGGWAGGMDIRITIAGSGFIGGTLAVAAIPPGVDPESVNVLRMPHVLIDARGGVPLEVTLEDIRTSLYHPMGDTNTASLVIAVMTGLINPLGTDTLSVTVQLETRPGRDWVFFSLLPPTAGVASADPSQLLTRVALATSPEVRFGTGVLGILGLPSNPSVNRVYDVQSRTRGWSFPIPSSSVFMGDARNVEHNRRVMVQSSAPNNPLSDVFPDGFPDFVPQSDTEPDGGAVIAGQVLPHPGDNDNFWRLTPVVRGNTTAAINTIPERFNQVYFINLADEEAVSAATEELRFNGIQGIFGQRTNARAVQVMQGYVPRAEHIIRPAGFAGVGPQGPNVPIGFAGTMPNFNATASGADDLVPVWGPTLVHTASLLAGTTYELAENSMYVFSVSTSTSTFELGMLANGTWLGPAQLAGTGITWTEVLSVTYMGMRFAYNPLSGQGIGGESRRL.

Residues 1 to 22 form a disordered region; that stretch reads MAPVVSRDRHRHKIPKPHQPAP. The SF3 helicase domain occupies 426–585; sequence SSKIMELSTI…ADFLRQHPGV (160 aa). 456 to 463 serves as a coordination point for ATP; sequence GPPGHGKS. Position 940 is an O-(5'-phospho-RNA)-tyrosine (tyrosine 940). One can recognise a Peptidase C24 domain in the interval 991–1136; the sequence is GNNCEDLPLH…KVFTPITDAP (146 aa). Catalysis depends on for 3CLpro activity residues histidine 1025, aspartate 1039, and cysteine 1103. The RdRp catalytic domain occupies 1379-1501; it reads DHCLELDYSK…TIPSHLTKSI (123 aa). Residues 1654-1686 are disordered; that stretch reads SDLIREGNMSDNKSTPEQQHESSRAMDAGATGA.

Post-translationally, specific enzymatic cleavages by its own cysteine protease yield mature proteins. The protease cleaves itself from the nascent polyprotein autocatalytically. Precursor p41 can be cleaved by viral 3CLpro into protein p19 and VPg, or cleaved by host protease into protein p23/2 and protein p18. VPg is uridylylated by the polymerase and is covalently attached to the 5'-end of the polyadenylated genomic and subgenomic RNAs. This uridylylated form acts as a nucleotide-peptide primer for the polymerase.

The protein localises to the virion. It is found in the host cytoplasm. It carries out the reaction a ribonucleoside 5'-triphosphate + H2O = a ribonucleoside 5'-diphosphate + phosphate + H(+). The catalysed reaction is Endopeptidase with a preference for cleavage when the P1 position is occupied by Glu-|-Xaa and the P1' position is occupied by Gly-|-Yaa.. The enzyme catalyses RNA(n) + a ribonucleoside 5'-triphosphate = RNA(n+1) + diphosphate. Functionally, displays NTPase activity, but no helicase activity. Induces the formation of convoluted membranes derived from the host ER. These remodeled membranes probably form the viral factories that contain the replication complex. Together with NS2 and NS4, initiates the formation of the replication complex. Its function is as follows. Viral genome-linked protein is covalently linked to the 5'-end of the positive-strand, negative-strand genomic RNAs and subgenomic RNA. Acts as a genome-linked replication primer. May recruit ribosome to viral RNA thereby promoting viral proteins translation. Interacts with host translation initiation complex to allow the translation of viral proteins. Processes the polyprotein. 3CLpro-RdRp is first released by autocleavage, then all other proteins are cleaved. May cleave polyadenylate-binding protein thereby inhibiting cellular translation. In terms of biological role, replicates genomic and antigenomic RNA by recognizing replications specific signals. Also transcribes a subgenomic mRNA by initiating RNA synthesis internally on antigenomic RNA. This sgRNA codes for structural proteins. Catalyzes the covalent attachment VPg with viral RNAs. Functionally, capsid protein self assembles to form an icosahedral capsid with a T=3 symmetry, about 35 nm in diameter, and consisting of 180 capsid proteins. A smaller form of capsid with a diameter of 23 nm might be capsid proteins assembled as icosahedron with T=1 symmetry. The capsid encapsulate VP2 proteins and genomic or subgenomic RNA. Attaches virion to target cells by binding histo-blood group antigens, inducing endocytosis of the viral particle. Acidification of the endosome induces conformational change of capsid protein thereby injecting virus genomic RNA into host cytoplasm. This is Genome polyprotein from Bos taurus (Bovine).